A 481-amino-acid chain; its full sequence is tRNA pseudouridine(38/39) synthase (481 aa).

Residue alanine 2 is modified to N-acetylalanine. Aspartate 119 acts as the Nucleophile in catalysis. Tyrosine 196 contributes to the substrate binding site.

This sequence belongs to the tRNA pseudouridine synthase TruA family.

The protein resides in the nucleus. The catalysed reaction is uridine(38/39) in tRNA = pseudouridine(38/39) in tRNA. Formation of pseudouridine at position 39 in the anticodon stem and loop of transfer RNAs. Also acts on position 38, but much less efficiently. This Mus musculus (Mouse) protein is tRNA pseudouridine(38/39) synthase (Pus3).